The chain runs to 506 residues: 2,3-bisphosphoglycerate-independent phosphoglycerate mutase (506 aa).

2 residues coordinate Mn(2+): aspartate 13 and serine 63. Catalysis depends on serine 63, which acts as the Phosphoserine intermediate. Residues histidine 124, 153-154, arginine 183, arginine 189, 254-257, and lysine 330 each bind substrate; these read RD and RADR. Mn(2+)-binding residues include aspartate 396, histidine 400, aspartate 437, histidine 438, and histidine 456.

This sequence belongs to the BPG-independent phosphoglycerate mutase family. In terms of assembly, monomer. Mn(2+) serves as cofactor.

The enzyme catalyses (2R)-2-phosphoglycerate = (2R)-3-phosphoglycerate. Its pathway is carbohydrate degradation; glycolysis; pyruvate from D-glyceraldehyde 3-phosphate: step 3/5. Its function is as follows. Catalyzes the interconversion of 2-phosphoglycerate and 3-phosphoglycerate. This chain is 2,3-bisphosphoglycerate-independent phosphoglycerate mutase, found in Cereibacter sphaeroides (strain ATCC 17025 / ATH 2.4.3) (Rhodobacter sphaeroides).